Here is a 1135-residue protein sequence, read N- to C-terminus: Protocadherin-18 (1135 aa).

Residues 1–27 form the signal peptide; sequence MHQMNAKMHFRFVFALLIVSFNHDVLG. 6 Cadherin domains span residues 28-137, 138-246, 247-354, 361-465, 466-576, and 582-688; these read KNLK…SPQF, SRSL…SPAF, EQQS…KPEI, PGKE…PPHF, QRSR…VPVV, and RNNT…STAM. Residues 28–699 are Extracellular-facing; it reads KNLKYRIYEE…SVSQASLDVS (672 aa). N-linked (GlcNAc...) asparagine glycosylation is present at asparagine 103. Residues asparagine 269, asparagine 420, asparagine 559, asparagine 583, and asparagine 641 are each glycosylated (N-linked (GlcNAc...) asparagine). A helical membrane pass occupies residues 700–720; it reads MIIIISLGAICAVLLVIMVLF. Residues 721 to 1135 are Cytoplasmic-facing; sequence ATRCNREKKD…NKLLQDVRQS (415 aa). Disordered stretches follow at residues 769–800, 869–889, 942–1003, and 1023–1046; these read LPIRSHHRSSPSSSPTLERGQMGSRQSHNSHQ, SLKDSGRGDSEAGDSDYDLGR, DYRS…STSS, and YSECSEVDRSNSLERRKGPLPAKT. Positions 791–800 are enriched in polar residues; the sequence is GSRQSHNSHQ. The segment covering 869-878 has biased composition (basic and acidic residues); that stretch reads SLKDSGRGDS. Residues 893–1135 form an interaction with DAB1 region; the sequence is IDRLLGEGFS…NKLLQDVRQS (243 aa). The span at 1028–1039 shows a compositional bias: basic and acidic residues; it reads EVDRSNSLERRK.

As to quaternary structure, interacts with DAB1. In terms of tissue distribution, expressed in all tissues, with highest expression in lung and ovary.

Its subcellular location is the cell membrane. Its function is as follows. Potential calcium-dependent cell-adhesion protein. The chain is Protocadherin-18 (PCDH18) from Homo sapiens (Human).